Consider the following 268-residue polypeptide: Probable 6-phosphogluconolactonase 1 (268 aa).

This sequence belongs to the glucosamine/galactosamine-6-phosphate isomerase family. 6-phosphogluconolactonase subfamily.

The protein localises to the cytoplasm. The protein resides in the cytosol. The enzyme catalyses 6-phospho-D-glucono-1,5-lactone + H2O = 6-phospho-D-gluconate + H(+). It functions in the pathway carbohydrate degradation; pentose phosphate pathway; D-ribulose 5-phosphate from D-glucose 6-phosphate (oxidative stage): step 2/3. In terms of biological role, catalyzes the hydrolysis of 6-phosphogluconolactone to 6-phosphogluconate. The polypeptide is Probable 6-phosphogluconolactonase 1 (Arabidopsis thaliana (Mouse-ear cress)).